The chain runs to 594 residues: Chitooligosaccharidolytic beta-N-acetylglucosaminidase (594 aa).

The N-terminal stretch at 1–22 is a signal peptide; sequence MWSRRIPLFIFGVLVLILSVAA. Intrachain disulfides connect Cys-31/Cys-59 and Cys-36/Cys-55. A glycan (N-linked (GlcNAc...) asparagine) is linked at Asn-164. Residues Asp-249 and His-303 each act as charge relay system in the active site. Cystine bridges form between Cys-316/Cys-373 and Cys-326/Cys-331. The active-site Charge relay system is Glu-368. Asn-375 carries N-linked (GlcNAc...) asparagine glycosylation. Intrachain disulfides connect Cys-478-Cys-491 and Cys-585-Cys-592.

Belongs to the glycosyl hydrolase 20 family. In terms of assembly, homodimer.

It catalyses the reaction Hydrolysis of terminal non-reducing N-acetyl-D-hexosamine residues in N-acetyl-beta-D-hexosaminides.. Inhibited by O-(2-acetamido-2-deoxy-D-glucopyransylidene)-amino-N-phenylcarbamate (PUGNAc). Inhibited by thiabendazole (TMG)-chitotriomycin. Inhibited by 6-(dimethylamino)-2-(2-(((5-methyl-1,3,4-thiadiazol-2-yl)methyl)amino)ethyl)- 1H-benzo[de]isoquinoline-1,3(2H)-dione (Q2), a synthesized non-carbohydrate unsymmetrical dyad of naphthalimide and thiadiazole having a dimethylamino group at C4 of the naphthalimide. Inhibited poorly by N-acetyl-glucosamine (NAG)-thiazoline (NGT), but when the thiazoline ring of NGT is replaced by a bulky substituent such as in compound 1,2-dideoxy-2'-methylamino-alpha-D-glucopyranoso-[2,1-d]-Delta2'-thiazoline (NMAGT), the inhibition constant Ki is lowered 600-fold compared to that of NGT. Inhibited by berberine, berberine analogs thalifendine and palmatine, and berberine derivative SYSU-1, but not by berberine analog tetrahydroberberine. Its function is as follows. Hydrolyzes one beta-GlcNAc unit at a time from the non-reducing ends of substrates, with a preference for shorter substrates. The 2-acetamido group and the beta-glycoside bond linkage in the substrate are required for its activity. Active with p-nitrophenyl (pNP)-beta-GlcNAc, pNP-beta-GalNAc and chitooligosaccharides (degree of polymerization from 2 to 6), but not with the complex N-glycan substrate (GlcNAcbeta-1,2Manalpha-1,6)(GlcNAcbeta-1,2Manalpha-1,3)Manbeta-1,4GlcNAcbeta-1,4GlcNAc-PA (GnGn-PA), pNP-alpha-GlcNAc or with the long polymer colloidal chitin. Involved in chitin catabolism. Involved in the degradation of old cuticle during the pupation stage. The sequence is that of Chitooligosaccharidolytic beta-N-acetylglucosaminidase from Ostrinia furnacalis (Asian corn borer).